An 83-amino-acid polypeptide reads, in one-letter code: ATP synthase subunit c (83 aa).

Helical transmembrane passes span 10 to 30 and 52 to 72; these read IAVA…FGLL and MFIV…IALY.

It belongs to the ATPase C chain family. In terms of assembly, F-type ATPases have 2 components, F(1) - the catalytic core - and F(0) - the membrane proton channel. F(1) has five subunits: alpha(3), beta(3), gamma(1), delta(1), epsilon(1). F(0) has three main subunits: a(1), b(2) and c(10-14). The alpha and beta chains form an alternating ring which encloses part of the gamma chain. F(1) is attached to F(0) by a central stalk formed by the gamma and epsilon chains, while a peripheral stalk is formed by the delta and b chains.

The protein localises to the cell inner membrane. Its function is as follows. F(1)F(0) ATP synthase produces ATP from ADP in the presence of a proton or sodium gradient. F-type ATPases consist of two structural domains, F(1) containing the extramembraneous catalytic core and F(0) containing the membrane proton channel, linked together by a central stalk and a peripheral stalk. During catalysis, ATP synthesis in the catalytic domain of F(1) is coupled via a rotary mechanism of the central stalk subunits to proton translocation. In terms of biological role, key component of the F(0) channel; it plays a direct role in translocation across the membrane. A homomeric c-ring of between 10-14 subunits forms the central stalk rotor element with the F(1) delta and epsilon subunits. The chain is ATP synthase subunit c from Shewanella amazonensis (strain ATCC BAA-1098 / SB2B).